A 425-amino-acid chain; its full sequence is Serine hydroxymethyltransferase 2 (425 aa).

(6S)-5,6,7,8-tetrahydrofolate-binding positions include L121 and 125 to 127; that span reads GHL. K230 bears the N6-(pyridoxal phosphate)lysine mark.

This sequence belongs to the SHMT family. In terms of assembly, homodimer. It depends on pyridoxal 5'-phosphate as a cofactor.

Its subcellular location is the cytoplasm. The catalysed reaction is (6R)-5,10-methylene-5,6,7,8-tetrahydrofolate + glycine + H2O = (6S)-5,6,7,8-tetrahydrofolate + L-serine. It functions in the pathway one-carbon metabolism; tetrahydrofolate interconversion. Its pathway is amino-acid biosynthesis; glycine biosynthesis; glycine from L-serine: step 1/1. In terms of biological role, catalyzes the reversible interconversion of serine and glycine with tetrahydrofolate (THF) serving as the one-carbon carrier. This reaction serves as the major source of one-carbon groups required for the biosynthesis of purines, thymidylate, methionine, and other important biomolecules. Also exhibits THF-independent aldolase activity toward beta-hydroxyamino acids, producing glycine and aldehydes, via a retro-aldol mechanism. In Mycobacterium bovis (strain ATCC BAA-935 / AF2122/97), this protein is Serine hydroxymethyltransferase 2.